The primary structure comprises 493 residues: Alcohol-forming fatty acyl-CoA reductase (493 aa).

Belongs to the fatty acyl-CoA reductase family.

It catalyses the reaction a long-chain fatty acyl-CoA + 2 NADPH + 2 H(+) = a long-chain primary fatty alcohol + 2 NADP(+) + CoA. Functionally, NADPH-dependent alcohol-forming fatty acyl-coenzyme A reductase that catalyzes the reduction of fatty acyl-CoA to fatty alcohols. The recombinant enzyme accepts saturated and mono-unsaturated fatty acyl-CoAs of 16 to 22 carbons. The protein is Alcohol-forming fatty acyl-CoA reductase of Simmondsia chinensis (Jojoba).